Consider the following 109-residue polypeptide: Parvalbumin beta (109 aa).

Ala2 carries the post-translational modification N-acetylalanine. Positions 22-41 are igE-binding; that stretch reads AGSFDHKKFFKACGLSGKST. EF-hand domains lie at 39 to 74 and 78 to 109; these read KSTD…FKAG and LSDA…MIKG. The Ca(2+) site is built by Asp52, Asp54, Ser56, Phe58, Glu60, Glu63, Asp91, Asp93, Asp95, Lys97, and Glu102.

Belongs to the parvalbumin family. In terms of processing, the N-terminus is blocked. As to expression, expressed in both white and dark muscles (at protein level). About eight and a half times lower expression in the dark muscle than in the white muscle (at protein level).

In terms of biological role, in muscle, parvalbumin is thought to be involved in relaxation after contraction. It binds two calcium ions. The sequence is that of Parvalbumin beta from Scomber japonicus (Chub mackerel).